The chain runs to 700 residues: Elongation factor G (700 aa).

Residues 10–285 (DRTRNIGIMA…AVIDYLPSPL (276 aa)) form the tr-type G domain. Residues 19–26 (AHIDAGKT), 83–87 (DTPGH), and 137–140 (NKMD) each bind GTP.

It belongs to the TRAFAC class translation factor GTPase superfamily. Classic translation factor GTPase family. EF-G/EF-2 subfamily.

It is found in the cytoplasm. Its function is as follows. Catalyzes the GTP-dependent ribosomal translocation step during translation elongation. During this step, the ribosome changes from the pre-translocational (PRE) to the post-translocational (POST) state as the newly formed A-site-bound peptidyl-tRNA and P-site-bound deacylated tRNA move to the P and E sites, respectively. Catalyzes the coordinated movement of the two tRNA molecules, the mRNA and conformational changes in the ribosome. The polypeptide is Elongation factor G (Lacticaseibacillus casei (strain BL23) (Lactobacillus casei)).